The chain runs to 380 residues: QRFP-like peptide receptor (380 aa).

Residues Met-1–Leu-51 lie on the Extracellular side of the membrane. Residues Asn-5 and Asn-21 are each glycosylated (N-linked (GlcNAc...) asparagine). A helical transmembrane segment spans residues Val-52–Val-72. Residues Trp-73–Asn-83 are Cytoplasmic-facing. A helical transmembrane segment spans residues Ile-84–Thr-104. Over Leu-105 to Leu-122 the chain is Extracellular. Residues Cys-120 and Cys-203 are joined by a disulfide bond. The chain crosses the membrane as a helical span at residues Val-123–Ile-143. The Cytoplasmic portion of the chain corresponds to Glu-144–Ala-164. A helical membrane pass occupies residues Gly-165–Val-185. Topologically, residues His-186–Tyr-216 are extracellular. The chain crosses the membrane as a helical span at residues Thr-217–Ile-237. At Arg-238 to Lys-269 the chain is on the cytoplasmic side. Residues Met-270 to Val-290 form a helical membrane-spanning segment. Over Met-291 to Lys-305 the chain is Extracellular. Residues Leu-306–Tyr-326 traverse the membrane as a helical segment. Topologically, residues Ala-327–Ile-380 are cytoplasmic.

Belongs to the G-protein coupled receptor 1 family.

It localises to the cell membrane. Receptor for QRFP-like peptide. The activity of this receptor is mediated by G proteins which activate a phosphatidyl-inositol-calcium second messenger system. In Branchiostoma floridae (Florida lancelet), this protein is QRFP-like peptide receptor.